Reading from the N-terminus, the 343-residue chain is S-adenosylmethionine:tRNA ribosyltransferase-isomerase (343 aa).

It belongs to the QueA family. In terms of assembly, monomer.

It is found in the cytoplasm. The catalysed reaction is 7-aminomethyl-7-carbaguanosine(34) in tRNA + S-adenosyl-L-methionine = epoxyqueuosine(34) in tRNA + adenine + L-methionine + 2 H(+). The protein operates within tRNA modification; tRNA-queuosine biosynthesis. Functionally, transfers and isomerizes the ribose moiety from AdoMet to the 7-aminomethyl group of 7-deazaguanine (preQ1-tRNA) to give epoxyqueuosine (oQ-tRNA). The protein is S-adenosylmethionine:tRNA ribosyltransferase-isomerase of Pseudoalteromonas translucida (strain TAC 125).